The primary structure comprises 685 residues: Threonine--tRNA ligase (685 aa).

Residues 1 to 28 form a disordered region; that stretch reads MTSPAPEHSAAPLRVPAGTTAGTAVREA. In terms of domain architecture, TGS spans 1–65; the sequence is MTSPAPEHSA…EVDVDVEPVA (65 aa). Residues 262–568 form a catalytic region; the sequence is DHRKLGTELD…LTEHYAGAFP (307 aa). Residues Cys367, His418, and His545 each coordinate Zn(2+).

The protein belongs to the class-II aminoacyl-tRNA synthetase family. Homodimer. It depends on Zn(2+) as a cofactor.

The protein localises to the cytoplasm. The enzyme catalyses tRNA(Thr) + L-threonine + ATP = L-threonyl-tRNA(Thr) + AMP + diphosphate + H(+). In terms of biological role, catalyzes the attachment of threonine to tRNA(Thr) in a two-step reaction: L-threonine is first activated by ATP to form Thr-AMP and then transferred to the acceptor end of tRNA(Thr). Also edits incorrectly charged L-seryl-tRNA(Thr). This is Threonine--tRNA ligase from Rhodococcus erythropolis (strain PR4 / NBRC 100887).